The following is a 72-amino-acid chain: Potassium channel toxin kappa-KTx 5.1 (72 aa).

Residues 1 to 23 form the signal peptide; it reads MKLLPLLFVILIVCAILPDEASC. Positions 24–43 are excised as a propeptide; the sequence is DQSELERKEENFKDESREIV. Disulfide bonds link cysteine 47/cysteine 64 and cysteine 51/cysteine 60. Histidine 70 carries the histidine amide modification.

Belongs to the short scorpion toxin superfamily. Potassium channel inhibitor kappa-KTx family. Kappa-KTx 5 subfamily. Expressed by the venom gland.

It localises to the secreted. Functionally, weak blocker of potassium channels Kv1.1/KCNA1 (IC(50)=578.5 nM-9.9 uM) and Kv1.6/KCNA6 (~60% block at 30 uM of toxin). Acts by binding to the pore and occluding it. Has a voltage-dependent mode of action, which can be explained by a high content of basic residues causing repulsions at higher membrane voltages. Shows a weak interaction with muscle-type nicotinic acetylcholine receptors (nAChR), since it inhibits alpha-bungarotoxin binding to muscle-type nAChR from T.californica (IC(50)=1.4 uM). This suggests it probably weakly inhibits muscle nAChR. The mode of binding to potassium channels of this toxin differs from its homologs (including HefuTx1), since it lacks the key aromatic residue of the functional dyad. In contrast, its functionally important site is composed of a number of basic residues. In Heterometrus laoticus (Thai giant scorpion), this protein is Potassium channel toxin kappa-KTx 5.1.